Consider the following 121-residue polypeptide: Small ribosomal subunit protein uS13 (121 aa).

The disordered stretch occupies residues 91–121; sequence HRKGLPMRGQRTRTNARTRKGPRKAGVALKK.

The protein belongs to the universal ribosomal protein uS13 family. In terms of assembly, part of the 30S ribosomal subunit. Forms a loose heterodimer with protein S19. Forms two bridges to the 50S subunit in the 70S ribosome.

Located at the top of the head of the 30S subunit, it contacts several helices of the 16S rRNA. In the 70S ribosome it contacts the 23S rRNA (bridge B1a) and protein L5 of the 50S subunit (bridge B1b), connecting the 2 subunits; these bridges are implicated in subunit movement. Contacts the tRNAs in the A and P-sites. The chain is Small ribosomal subunit protein uS13 from Cupriavidus necator (strain ATCC 17699 / DSM 428 / KCTC 22496 / NCIMB 10442 / H16 / Stanier 337) (Ralstonia eutropha).